The sequence spans 1103 residues: Activity-dependent neuroprotector homeobox protein (1103 aa).

Residues Lys39 and Lys72 each participate in a glycyl lysine isopeptide (Lys-Gly) (interchain with G-Cter in SUMO2) cross-link. The segment at Phe74–His97 adopts a C2H2-type 1; degenerate zinc-finger fold. Position 98 is a phosphoserine (Ser98). The C2H2-type 2; degenerate zinc finger occupies Leu107–His129. Residues Ser133–Pro154 are disordered. Basic and acidic residues predominate over residues Phe143–Pro154. Glycyl lysine isopeptide (Lys-Gly) (interchain with G-Cter in SUMO2) cross-links involve residues Lys144 and Lys155. The C2H2-type 3; degenerate zinc-finger motif lies at Tyr165 to His188. Glycyl lysine isopeptide (Lys-Gly) (interchain with G-Cter in SUMO2) cross-links involve residues Lys203, Lys231, Lys266, Lys274, Lys278, Lys279, Lys311, and Lys335. The C2H2-type 4; degenerate zinc finger occupies Ile221 to His244. Arg348 is modified (asymmetric dimethylarginine). Residues Asn354–Gln361 are neuroprotective peptide (NAP). The interval Pro360–Asn439 is disordered. Glycyl lysine isopeptide (Lys-Gly) (interchain with G-Cter in SUMO2) cross-links involve residues Lys367 and Lys408. Polar residues predominate over residues Ser393 to Gln423. 2 positions are modified to phosphoserine: Ser409 and Ser413. A Glycyl lysine isopeptide (Lys-Gly) (interchain with G-Cter in SUMO2) cross-link involves residue Lys427. The span at Lys427 to Ser438 shows a compositional bias: pro residues. The C2H2-type 5; atypical zinc-finger motif lies at Lys447–His469. 2 consecutive C2H2-type zinc fingers follow at residues Ser489–His510 and Leu512–His535. Glycyl lysine isopeptide (Lys-Gly) (interchain with G-Cter in SUMO2) cross-links involve residues Lys600 and Lys606. Ser608 is subject to Phosphoserine. Residues Lys616, Lys621, Lys632, and Lys658 each participate in a glycyl lysine isopeptide (Lys-Gly) (interchain with G-Cter in SUMO2) cross-link. The C2H2-type 8; atypical zinc-finger motif lies at Thr622 to His647. The segment at Tyr662 to His686 adopts a C2H2-type 9; atypical zinc-finger fold. The interval Gly691 to Leu712 is disordered. The segment covering Lys692–Pro710 has biased composition (polar residues). Lys699 participates in a covalent cross-link: Glycyl lysine isopeptide (Lys-Gly) (interchain with G-Cter in SUMO2). Ser709 carries the post-translational modification Phosphoserine. Glycyl lysine isopeptide (Lys-Gly) (interchain with G-Cter in SUMO2) cross-links involve residues Lys716, Lys728, and Lys731. A Phosphoserine modification is found at Ser738. Residue Lys745 forms a Glycyl lysine isopeptide (Lys-Gly) (interchain with G-Cter in SUMO2) linkage. The homeobox DNA-binding region spans Leu754–Asp814. At Ser805 the chain carries Phosphoserine. Residues Lys807, Lys829, and Lys835 each participate in a glycyl lysine isopeptide (Lys-Gly) (interchain with G-Cter in SUMO2) cross-link. The tract at residues Asp873–Trp1029 is disordered. Phosphoserine occurs at positions 876, 878, 886, 889, and 905. Residues Lys914, Lys929, and Lys936 each participate in a glycyl lysine isopeptide (Lys-Gly) (interchain with G-Cter in SUMO2) cross-link. Over residues Glu922–Ser954 the composition is skewed to basic and acidic residues. Ser954 and Ser956 each carry phosphoserine. A compositionally biased stretch (polar residues) spans Pro972–Val982. Lys1017 is covalently cross-linked (Glycyl lysine isopeptide (Lys-Gly) (interchain with G-Cter in SUMO2)). An N6-acetyllysine; alternate mark is found at Lys1036 and Lys1043. Residues Lys1036 and Lys1043 each participate in a glycyl lysine isopeptide (Lys-Gly) (interchain with G-Cter in SUMO2); alternate cross-link. Positions Gln1045–Ala1103 are disordered. At Ser1072 the chain carries Phosphoserine.

As to quaternary structure, interacts (via N-terminal region) with beta-catenin/CTNNB1 (via the central armadillo domains); interaction is direct and stabilizes CTNNB1 by modulating its phosphorylation by glycogen synthase kinase-3 beta GSK3B.

It localises to the nucleus. Its subcellular location is the chromosome. May be involved in transcriptional regulation. May mediate some of the neuroprotective peptide VIP-associated effects involving normal growth and cancer proliferation. Positively modulates WNT-beta-catenin/CTNN1B signaling, acting by regulating phosphorylation of, and thereby stabilizing, CTNNB1. May be required for neural induction and neuronal differentiation. May be involved in erythroid differentiation. The protein is Activity-dependent neuroprotector homeobox protein (Adnp) of Rattus norvegicus (Rat).